The primary structure comprises 154 residues: Myoglobin (154 aa).

The 147-residue stretch at 2-148 (GLSDDEWNHV…FRNDMASKYK (147 aa)) folds into the Globin domain. His-65 is a binding site for nitrite. His-65 is a binding site for O2. His-94 is a heme b binding site.

The protein belongs to the globin family. As to quaternary structure, monomeric.

It localises to the cytoplasm. It is found in the sarcoplasm. It catalyses the reaction Fe(III)-heme b-[protein] + nitric oxide + H2O = Fe(II)-heme b-[protein] + nitrite + 2 H(+). It carries out the reaction H2O2 + AH2 = A + 2 H2O. Functionally, monomeric heme protein which primary function is to store oxygen and facilitate its diffusion within muscle tissues. Reversibly binds oxygen through a pentacoordinated heme iron and enables its timely and efficient release as needed during periods of heightened demand. Depending on the oxidative conditions of tissues and cells, and in addition to its ability to bind oxygen, it also has a nitrite reductase activity whereby it regulates the production of bioactive nitric oxide. Under stress conditions, like hypoxia and anoxia, it also protects cells against reactive oxygen species thanks to its pseudoperoxidase activity. This is Myoglobin (MB) from Chelonia mydas (Green sea-turtle).